Consider the following 176-residue polypeptide: ATP-dependent protease subunit HslV (176 aa).

T5 is an active-site residue. The Na(+) site is built by A161, C164, and T167.

Belongs to the peptidase T1B family. HslV subfamily. A double ring-shaped homohexamer of HslV is capped on each side by a ring-shaped HslU homohexamer. The assembly of the HslU/HslV complex is dependent on binding of ATP.

It is found in the cytoplasm. It catalyses the reaction ATP-dependent cleavage of peptide bonds with broad specificity.. With respect to regulation, allosterically activated by HslU binding. Functionally, protease subunit of a proteasome-like degradation complex believed to be a general protein degrading machinery. The chain is ATP-dependent protease subunit HslV from Desulforamulus reducens (strain ATCC BAA-1160 / DSM 100696 / MI-1) (Desulfotomaculum reducens).